A 429-amino-acid chain; its full sequence is Kynureninase (429 aa).

Pyridoxal 5'-phosphate contacts are provided by residues L109, T110, 137 to 140, D222, H225, and Y247; that span reads FPSD. K248 bears the N6-(pyridoxal phosphate)lysine mark. Residues W278 and N306 each coordinate pyridoxal 5'-phosphate.

Belongs to the kynureninase family. As to quaternary structure, homodimer. It depends on pyridoxal 5'-phosphate as a cofactor.

It catalyses the reaction L-kynurenine + H2O = anthranilate + L-alanine + H(+). It carries out the reaction 3-hydroxy-L-kynurenine + H2O = 3-hydroxyanthranilate + L-alanine + H(+). Its pathway is amino-acid degradation; L-kynurenine degradation; L-alanine and anthranilate from L-kynurenine: step 1/1. It participates in cofactor biosynthesis; NAD(+) biosynthesis; quinolinate from L-kynurenine: step 2/3. Its function is as follows. Catalyzes the cleavage of L-kynurenine (L-Kyn) and L-3-hydroxykynurenine (L-3OHKyn) into anthranilic acid (AA) and 3-hydroxyanthranilic acid (3-OHAA), respectively. This is Kynureninase from Salinispora tropica (strain ATCC BAA-916 / DSM 44818 / JCM 13857 / NBRC 105044 / CNB-440).